Here is a 316-residue protein sequence, read N- to C-terminus: tRNA dimethylallyltransferase (316 aa).

17–24 (GPTASGKT) lines the ATP pocket. Substrate is bound at residue 19–24 (TASGKT). Interaction with substrate tRNA regions lie at residues 42–45 (DSAL), 166–170 (QRLSR), 247–252 (RCVGYR), and 280–287 (KRQITWLR).

Belongs to the IPP transferase family. Monomer. Requires Mg(2+) as cofactor.

The enzyme catalyses adenosine(37) in tRNA + dimethylallyl diphosphate = N(6)-dimethylallyladenosine(37) in tRNA + diphosphate. Its function is as follows. Catalyzes the transfer of a dimethylallyl group onto the adenine at position 37 in tRNAs that read codons beginning with uridine, leading to the formation of N6-(dimethylallyl)adenosine (i(6)A). This Shigella dysenteriae serotype 1 (strain Sd197) protein is tRNA dimethylallyltransferase.